We begin with the raw amino-acid sequence, 466 residues long: Asparagine--tRNA ligase (466 aa).

It belongs to the class-II aminoacyl-tRNA synthetase family. Homodimer.

The protein resides in the cytoplasm. It catalyses the reaction tRNA(Asn) + L-asparagine + ATP = L-asparaginyl-tRNA(Asn) + AMP + diphosphate + H(+). The sequence is that of Asparagine--tRNA ligase from Salmonella choleraesuis (strain SC-B67).